The chain runs to 3498 residues: Mediator of RNA polymerase II transcription subunit 12 (3498 aa).

Disordered stretches follow at residues 365–456 (IKQH…HTDI), 497–764 (GGVG…EPEK), 2209–2576 (AKKR…AYMK), 2589–2620 (ENNRIMEEQQREREMEAARKEAARRAAEEAYA), 2637–2889 (LRKE…KEKQ), and 2917–3498 (NVAG…PNQY). The span at 368-394 (HEKRKAGSLKKSERRRRRGLSKNRPKK) shows a compositional bias: basic residues. A compositionally biased stretch (basic and acidic residues) spans 404–416 (SLDHDKVQIKQEP). Polar residues-rich tracts occupy residues 424-440 (GQQSDNSMDYDSFSHQY) and 512-536 (SNPTPTETVNTQPQIDFESSPSASP). Positions 539–570 (SVDKENECEKKEDESKTKEKNKDKEKDKEKEK) form a coiled coil. Composition is skewed to basic and acidic residues over residues 540–578 (VDKENECEKKEDESKTKEKNKDKEKDKEKEKSVDEHTND) and 593–614 (ANDKTDASEKQKLVEEEPTGKE). A compositionally biased stretch (low complexity) spans 621–630 (SKTAKTSTSA). Basic and acidic residues-rich tracts occupy residues 691-719 (EVDKAPEVDKSEKEHEDDIMIIESNKKAD), 738-764 (ESEKKKDGEEERDKNKDTDVADNEPEK), and 2209-2285 (AKKR…KRAS). Residues 2142-3498 (QTTRLDKVAK…YPNQQPPNQY (1357 aa)) form a required for nuclear localization region. Residues 2203–2290 (VIDEEEAKKR…EKRASDAAAA (88 aa)) are a coiled coil. 2 stretches are compositionally biased toward low complexity: residues 2342 to 2360 (RADTAQAAAATTQWNAPIA) and 2409 to 2431 (LADASAAAAAANSNAMGNTSSMP). Residues 2395 to 2420 (RNLLNRKKEEKRNSLADASAAAAAAN) adopt a coiled-coil conformation. A compositionally biased stretch (polar residues) spans 2444–2456 (QSAGATQQLQGMQ). Positions 2459 to 2479 (QMGGSMSGMNQNMGGMNQSMS) are enriched in low complexity. The segment covering 2514–2530 (NRSSGPVSSETRQQIME) has biased composition (polar residues). Composition is skewed to basic and acidic residues over residues 2547-2576 (QKQRDAREREAREREAREHQERMQREAYMK), 2589-2616 (ENNRIMEEQQREREMEAARKEAARRAAE), and 2637-2724 (LRKE…EQQR). Residues 2725–2770 (RSQQNPYMNQQGQYSQQPPPSYQQSSYPNNYQPGQQGNQPPNYQQP) are compositionally biased toward low complexity. The span at 2771-2783 (SHQSMQQGHQAGY) shows a compositional bias: polar residues. Positions 2784-2810 (QQTSNQMQMNMQQQQNRQQGGPQQSFS) are enriched in low complexity. Composition is skewed to polar residues over residues 2816–2827 (NQPSQPGYSGYN), 2842–2852 (RNPFGNQQDMQ), 2868–2881 (HAQQYQHTQNQLSL), and 2926–2956 (GQQQLGASDQMGTSQLPGASTSRMNQGSSNP). Residues 2957 to 2993 (QGGMQSYQQQQPVLGQPGPIQTGQSTQQQIPAQSQQQ) show a composition bias toward low complexity. Residues 2994–3009 (YNSGRPQMHTTPTKND) are compositionally biased toward polar residues. A compositionally biased stretch (low complexity) spans 3039-3100 (GQNVPGGYQQ…NVSQSQSAAQ (62 aa)). Residues 3103-3127 (RPSQDSAYQQSGYNQTGNQSYQRPD) are compositionally biased toward polar residues. Composition is skewed to low complexity over residues 3128 to 3184 (QQQQ…SAQY) and 3192 to 3223 (QGYDQQQQGQIAPQQAQNPQASQSYGQQQTQQ). A compositionally biased stretch (polar residues) spans 3231–3253 (SGYTANSGGSSNILNQSMEESGL). The segment covering 3254 to 3311 (NQGFSGASSNASSQQGGSSQMQQSGYGMPGNQMQMQQNQKQQVQRGMPTGMGQTNMGQ) has biased composition (low complexity). Gly residues predominate over residues 3312 to 3321 (SGMGQSGMGQ). Low complexity-rich tracts occupy residues 3336–3356 (QGQQSQQPQQPQVSQQQNQRG) and 3370–3408 (QQQHQPQQSQISQQQQQQDQYRRMQAAQMQQQPTAQGQQ). The segment covering 3414–3425 (PSQQQSGAAYSN) has biased composition (polar residues). The segment covering 3426–3436 (QMQFQGVRQGQ) has biased composition (low complexity). The segment covering 3437–3446 (QGMGGMGGSG) has biased composition (gly residues). The segment covering 3447–3498 (QQQPQTQPHGSNQYYQQQQDQRMQQQPQQPGQQQQHGYGMGQYPNQQPPNQY) has biased composition (low complexity).

The protein belongs to the Mediator complex subunit 12 family. As to quaternary structure, component of the Mediator complex. As to expression, ubiquitously expressed.

It localises to the nucleus. Its function is as follows. Component of the Mediator complex, a coactivator involved in regulated gene transcription of nearly all RNA polymerase II-dependent genes. Mediator functions as a bridge to convey information from gene-specific regulatory proteins to the basal RNA polymerase II transcription machinery. Mediator is recruited to promoters by direct interactions with regulatory proteins and serves as a scaffold for the assembly of a functional preinitiation complex with RNA polymerase II and the general transcription factors. Functions downstream of let-60 during vulval induction. Required for asymmetric division of T-cells and for hypodermal development. This chain is Mediator of RNA polymerase II transcription subunit 12 (dpy-22), found in Caenorhabditis elegans.